A 303-amino-acid polypeptide reads, in one-letter code: UDP-3-O-acyl-N-acetylglucosamine deacetylase (303 aa).

Residues His-78, His-237, and Asp-241 each coordinate Zn(2+). His-264 acts as the Proton donor in catalysis.

Belongs to the LpxC family. Zn(2+) serves as cofactor.

It catalyses the reaction a UDP-3-O-[(3R)-3-hydroxyacyl]-N-acetyl-alpha-D-glucosamine + H2O = a UDP-3-O-[(3R)-3-hydroxyacyl]-alpha-D-glucosamine + acetate. The protein operates within glycolipid biosynthesis; lipid IV(A) biosynthesis; lipid IV(A) from (3R)-3-hydroxytetradecanoyl-[acyl-carrier-protein] and UDP-N-acetyl-alpha-D-glucosamine: step 2/6. Functionally, catalyzes the hydrolysis of UDP-3-O-myristoyl-N-acetylglucosamine to form UDP-3-O-myristoylglucosamine and acetate, the committed step in lipid A biosynthesis. This chain is UDP-3-O-acyl-N-acetylglucosamine deacetylase, found in Pseudomonas syringae pv. tomato (strain ATCC BAA-871 / DC3000).